The following is a 184-amino-acid chain: Cytidylate kinase (184 aa).

Position 8–16 (8–16 (GQPGSGKTT)) interacts with ATP.

This sequence belongs to the cytidylate kinase family. Type 2 subfamily.

The protein localises to the cytoplasm. The catalysed reaction is CMP + ATP = CDP + ADP. It carries out the reaction dCMP + ATP = dCDP + ADP. This Pyrobaculum aerophilum (strain ATCC 51768 / DSM 7523 / JCM 9630 / CIP 104966 / NBRC 100827 / IM2) protein is Cytidylate kinase.